Here is a 185-residue protein sequence, read N- to C-terminus: Homeobox protein TGIF2LY (185 aa).

2 disordered regions span residues 1-58 (MEAA…GNLP) and 166-185 (RCQERSNQIRSRPLARSSPE). The segment covering 21–39 (AKTQSPAQDTSIMSRNNAD) has biased composition (polar residues). Positions 48 to 111 (EHKKKRKGNL…INARRRILPD (64 aa)) form a DNA-binding region, homeobox; TALE-type.

This sequence belongs to the TALE/TGIF homeobox family. As to expression, specifically expressed in adult testis.

Its subcellular location is the nucleus. Functionally, may have a transcription role in testis. May act as a competitor/regulator of TGIF2LX. In Homo sapiens (Human), this protein is Homeobox protein TGIF2LY (TGIF2LY).